Consider the following 286-residue polypeptide: DegV domain-containing protein SPs1668 (286 aa).

Positions 3-282 constitute a DegV domain; the sequence is FTIMTDSTAD…PNTLAVFVIG (280 aa). Residues T62 and S94 each contribute to the hexadecanoate site.

May bind long-chain fatty acids, such as palmitate, and may play a role in lipid transport or fatty acid metabolism. The polypeptide is DegV domain-containing protein SPs1668 (Streptococcus pyogenes serotype M3 (strain SSI-1)).